We begin with the raw amino-acid sequence, 137 residues long: Large ribosomal subunit protein eL28 (137 aa).

S2 is modified (N-acetylserine). Residues K58 and K65 each participate in a glycyl lysine isopeptide (Lys-Gly) (interchain with G-Cter in SUMO2) cross-link. S115 carries the phosphoserine modification.

Belongs to the eukaryotic ribosomal protein eL28 family. As to quaternary structure, component of the large ribosomal subunit.

The protein localises to the cytoplasm. Component of the large ribosomal subunit. The ribosome is a large ribonucleoprotein complex responsible for the synthesis of proteins in the cell. In Bos taurus (Bovine), this protein is Large ribosomal subunit protein eL28 (RPL28).